The primary structure comprises 132 residues: MSNKFLGTWKLVSSENFDDYMKALGVGLATRKLGNLAKPRVIISKKGDIITIRTESTFKNTEISFKLGQEFEETTADNRKAKSVVTLARGSLNQVQKWDGKETTIKRKLVDGKMVVECKMKDVVCTRIYEKV.

Residue S2 is modified to N-acetylserine. R107 contributes to the (9Z)-octadecenoate binding site. Hexadecanoate is bound at residue R107. C118 and C125 are oxidised to a cystine. 127–129 (RIY) provides a ligand contact to (9Z)-octadecenoate. A hexadecanoate-binding site is contributed by 127-129 (RIY).

This sequence belongs to the calycin superfamily. Fatty-acid binding protein (FABP) family. As to quaternary structure, monomer.

Its subcellular location is the cytoplasm. In terms of biological role, may play a role in lipid transport protein in Schwann cells. May bind cholesterol. The polypeptide is Myelin P2 protein (Sus scrofa (Pig)).